Here is a 245-residue protein sequence, read N- to C-terminus: MNNKFDALKDDDSGDHDQNEENSTQKDGEKEKTDRDKSQSSGKRKAVVPGPAEHPLQYNYTFWYSRRTPGRPTSSQSYEQNIKQIGTFASVEQFWKFYSHMVRPGDLTGHSDFHLFKEGIKPMWEDDANKNGGKWIIRLRKGLASRCWENLILAMLGEQFMVGEEICGAVVSVRFQEDIISIWNKTASDQATTARIRDTLRRVLNLPPNTIMEYKTHTDSIKMPGRLGPQRLLFQNLWKPRLNVP.

A compositionally biased stretch (basic and acidic residues) spans 1 to 38 (MNNKFDALKDDDSGDHDQNEENSTQKDGEKEKTDRDKS). Residues 1–52 (MNNKFDALKDDDSGDHDQNEENSTQKDGEKEKTDRDKSQSSGKRKAVVPGPA) form a disordered region. Ser13 is subject to Phosphoserine. Residues 54-57 (HPLQ) form an EIF4EBP1/2/3 binding region. 78-79 (YE) provides a ligand contact to mRNA. The tract at residues 95 to 99 (WKFYS) is EIF4EBP1/2/3 binding. MRNA-binding positions include His110 and 124-125 (WE). The residue at position 134 (Lys134) is an N6-acetyllysine; alternate. Lys134 participates in a covalent cross-link: Glycyl lysine isopeptide (Lys-Gly) (interchain with G-Cter in ISG15); alternate. The EIF4EBP1/2/3 binding stretch occupies residues 150-157 (NLILAMLG). MRNA-binding positions include 174–179 (RFQEDI) and 222–224 (KMP). A Glycyl lysine isopeptide (Lys-Gly) (interchain with G-Cter in ISG15) cross-link involves residue Lys222.

Belongs to the eukaryotic initiation factor 4E family. Interacts with EIF4EBP1, EIF4EBP2 and EIF4EBP3. Does not interact with eIF4G (EIF4G1, EIF4G2 or EIF4G3). Component of the 4EHP-GYF2 complex, at least composed of EIF4E2, GIGYF2 and ZNF598. Interacts with GIGYF2 (via the 4EHP-binding motif); the interaction is direct. Interacts with EIF4ENIF1/4E-T (via YXXXXLphi motif); increasing affinity for the 7-methylguanosine-containing mRNA cap. Post-translationally, ubiquitinated by ARIH1. The consequences of ubiquitination are however unclear: according to a report, EIF4E2 ubiquitination leads to promote EIF4E2 cap-binding and protein translation arrest. According to another report ubiquitination leads to its subsequent degradation. ISGylation enhances its cap structure-binding activity and translation-inhibition activity. In terms of tissue distribution, widely expressed with highest levels in testis, kidney and liver.

It localises to the cytoplasm. The protein resides in the P-body. In terms of biological role, recognizes and binds the 7-methylguanosine-containing mRNA cap during an early step in the initiation. Acts as a repressor of translation initiation. In contrast to EIF4E, it is unable to bind eIF4G (EIF4G1, EIF4G2 or EIF4G3), suggesting that it acts by competing with EIF4E and block assembly of eIF4F at the cap. In P-bodies, component of a complex that promotes miRNA-mediated translational repression. Involved in virus-induced host response by mediating miRNA MIR34A-induced translational silencing which controls IFNB1 production by a negative feedback mechanism. Its function is as follows. Component of the 4EHP-GYF2 complex, a multiprotein complex that acts as a repressor of translation initiation. In association with GIGYF2, assists ribosome-associated quality control (RQC) by sequestering the mRNA cap, blocking ribosome initiation and decreasing the translational load on problematic messages. Part of a pathway that works in parallel to RQC-mediated degradation of the stalled nascent polypeptide. GIGYF2 and EIF4E2 work downstream and independently of ZNF598, which seems to work as a scaffold that can recruit them to faulty mRNA even if alternative recruitment mechanisms may exist. This is Eukaryotic translation initiation factor 4E type 2 from Mus musculus (Mouse).